We begin with the raw amino-acid sequence, 324 residues long: Protoheme IX farnesyltransferase (324 aa).

9 helical membrane passes run 31 to 51, 53 to 73, 104 to 124, 125 to 145, 153 to 173, 181 to 201, 222 to 242, 243 to 263, and 285 to 305; these read LIVLFLITTAAGMWVAARGEV, PVLALITLLTGAMAAGSANTI, LVFAIALAVGAFSLQTLCANL, LSACLEMAGIAVYVGVYTHWL, IVIGGAAGAIPPLVGWAAVTG, VLFAIIFIWTPPHFWPLAMLI, TAWQIFGYTLVLLPTTLLLVY, PLHACGLIYGAIALVLGVVFI, and FSILYMMILCAAMGIDSLPLT.

It belongs to the UbiA prenyltransferase family. Protoheme IX farnesyltransferase subfamily.

It is found in the cell inner membrane. The enzyme catalyses heme b + (2E,6E)-farnesyl diphosphate + H2O = Fe(II)-heme o + diphosphate. It functions in the pathway porphyrin-containing compound metabolism; heme O biosynthesis; heme O from protoheme: step 1/1. Its function is as follows. Converts heme B (protoheme IX) to heme O by substitution of the vinyl group on carbon 2 of heme B porphyrin ring with a hydroxyethyl farnesyl side group. This is Protoheme IX farnesyltransferase from Cyanothece sp. (strain PCC 7425 / ATCC 29141).